Consider the following 409-residue polypeptide: Methylthioribose-1-phosphate isomerase (409 aa).

Catalysis depends on D277, which acts as the Proton donor.

It belongs to the eIF-2B alpha/beta/delta subunits family. MtnA subfamily.

It is found in the cytoplasm. It localises to the nucleus. It carries out the reaction 5-(methylsulfanyl)-alpha-D-ribose 1-phosphate = 5-(methylsulfanyl)-D-ribulose 1-phosphate. Its pathway is amino-acid biosynthesis; L-methionine biosynthesis via salvage pathway; L-methionine from S-methyl-5-thio-alpha-D-ribose 1-phosphate: step 1/6. Functionally, catalyzes the interconversion of methylthioribose-1-phosphate (MTR-1-P) into methylthioribulose-1-phosphate (MTRu-1-P). The protein is Methylthioribose-1-phosphate isomerase of Scheffersomyces stipitis (strain ATCC 58785 / CBS 6054 / NBRC 10063 / NRRL Y-11545) (Yeast).